The chain runs to 435 residues: MSKFIINPSNSMYGNLKIPGDKSISHRSIMLGSLANGVTKISGFLEGKDVLSTLKGFQNMGVKIERNSDNVIIYGVGLNGLKKSLVPLNFGNSGTSIRLISGILAAQTFDSELYGDESLSKRPMGRVINPLVQMGALIESNDGKLPIKIKGGQTLKGINYDLPVASAQVKSCILLAGLYAQGETCIKESILTRDHTERMLKGLGYRLDTNKNKICLTGGAQLNAANIQVPSDISSAAFFIVAASIAPQADITLIGVNVNPTRTGIIDILKLMGANLSLSNECVIGGELLANIRIQSAQLKGIRIPKDLVPLAIDEFPAIFIAASCAKGETILTNAKELRVKESDRIQVMADGLSILGIENEVFEDGIKIKGGVFSKPSSTIKSHHDHRISMSFAIASLRCHYAIEIEDVDNVQTSFPNFVELANQIGMNISLVSA.

The 3-phosphoshikimate site is built by Lys-22, Ser-23, and Arg-27. Position 22 (Lys-22) interacts with phosphoenolpyruvate. The phosphoenolpyruvate site is built by Gly-94 and Arg-122. 4 residues coordinate 3-phosphoshikimate: Ser-166, Gln-168, Asp-314, and Lys-341. A phosphoenolpyruvate-binding site is contributed by Gln-168. Catalysis depends on Asp-314, which acts as the Proton acceptor. Residues Arg-345 and Arg-388 each contribute to the phosphoenolpyruvate site.

The protein belongs to the EPSP synthase family. Monomer.

The protein localises to the cytoplasm. The catalysed reaction is 3-phosphoshikimate + phosphoenolpyruvate = 5-O-(1-carboxyvinyl)-3-phosphoshikimate + phosphate. It functions in the pathway metabolic intermediate biosynthesis; chorismate biosynthesis; chorismate from D-erythrose 4-phosphate and phosphoenolpyruvate: step 6/7. In terms of biological role, catalyzes the transfer of the enolpyruvyl moiety of phosphoenolpyruvate (PEP) to the 5-hydroxyl of shikimate-3-phosphate (S3P) to produce enolpyruvyl shikimate-3-phosphate and inorganic phosphate. In Vesicomyosocius okutanii subsp. Calyptogena okutanii (strain HA), this protein is 3-phosphoshikimate 1-carboxyvinyltransferase.